The chain runs to 463 residues: Siroheme synthase (463 aa).

Residues 1–203 (MDYLPLFHKL…GQGAEAERLL (203 aa)) are precorrin-2 dehydrogenase /sirohydrochlorin ferrochelatase. NAD(+) contacts are provided by residues 22-23 (EI) and 43-44 (PD). Phosphoserine is present on S128. The interval 216–463 (GEVYLVGAGP…LAWFEGSQNS (248 aa)) is uroporphyrinogen-III C-methyltransferase. P225 contributes to the S-adenosyl-L-methionine binding site. Catalysis depends on D248, which acts as the Proton acceptor. K270 serves as the catalytic Proton donor. S-adenosyl-L-methionine-binding positions include 301–303 (GGD), I306, 331–332 (TA), M383, and G412.

This sequence in the N-terminal section; belongs to the precorrin-2 dehydrogenase / sirohydrochlorin ferrochelatase family. In the C-terminal section; belongs to the precorrin methyltransferase family.

It catalyses the reaction uroporphyrinogen III + 2 S-adenosyl-L-methionine = precorrin-2 + 2 S-adenosyl-L-homocysteine + H(+). The enzyme catalyses precorrin-2 + NAD(+) = sirohydrochlorin + NADH + 2 H(+). It carries out the reaction siroheme + 2 H(+) = sirohydrochlorin + Fe(2+). It functions in the pathway cofactor biosynthesis; adenosylcobalamin biosynthesis; precorrin-2 from uroporphyrinogen III: step 1/1. Its pathway is cofactor biosynthesis; adenosylcobalamin biosynthesis; sirohydrochlorin from precorrin-2: step 1/1. It participates in porphyrin-containing compound metabolism; siroheme biosynthesis; precorrin-2 from uroporphyrinogen III: step 1/1. The protein operates within porphyrin-containing compound metabolism; siroheme biosynthesis; siroheme from sirohydrochlorin: step 1/1. It functions in the pathway porphyrin-containing compound metabolism; siroheme biosynthesis; sirohydrochlorin from precorrin-2: step 1/1. In terms of biological role, multifunctional enzyme that catalyzes the SAM-dependent methylations of uroporphyrinogen III at position C-2 and C-7 to form precorrin-2 via precorrin-1. Then it catalyzes the NAD-dependent ring dehydrogenation of precorrin-2 to yield sirohydrochlorin. Finally, it catalyzes the ferrochelation of sirohydrochlorin to yield siroheme. The polypeptide is Siroheme synthase (Pseudomonas putida (strain ATCC 700007 / DSM 6899 / JCM 31910 / BCRC 17059 / LMG 24140 / F1)).